A 260-amino-acid chain; its full sequence is Recombination-promoting nuclease RpnD (260 aa).

This sequence belongs to the Rpn/YhgA-like nuclease family.

In terms of biological role, a low activity DNA endonuclease probably yielding 3'-hydroxyl ends. Involved in RecA-independent recombination and horizontal gene transfer. This chain is Recombination-promoting nuclease RpnD (rpnD), found in Escherichia coli O157:H7.